A 129-amino-acid polypeptide reads, in one-letter code: Small ribosomal subunit protein uS8 (129 aa).

The protein belongs to the universal ribosomal protein uS8 family. As to quaternary structure, part of the 30S ribosomal subunit.

In terms of biological role, one of the primary rRNA binding proteins, it binds directly to 16S rRNA central domain where it helps coordinate assembly of the platform of the 30S subunit. The polypeptide is Small ribosomal subunit protein uS8 (Thermoplasma volcanium (strain ATCC 51530 / DSM 4299 / JCM 9571 / NBRC 15438 / GSS1)).